The sequence spans 128 residues: Glyoxylase-like domain-containing protein (128 aa).

The VOC domain occupies Gln6–Arg125.

It participates in mycotoxin biosynthesis. Its function is as follows. Glyoxylase-like domain-containing protein; part of the gene cluster that mediates the biosynthesis of the selective antifungal agent ascochitine, an o-quinone methide that plays a possible protective role against other microbial competitors in nature and is considered to be important for pathogenicity of legume-associated Didymella species. The pathway probably begins with the synthesis of a keto-aldehyde intermediate by the ascochitine non-reducing polyketide synthase pksAC from successive condensations of 4 malonyl-CoA units, presumably with a simple acetyl-CoA starter unit. Release of the keto-aldehyde intermediate is consistent with the presence of the C-terminal reductive release domain. The HR-PKS (orf7) probably makes a diketide starter unit which is passed to the non-reducing polyketide synthase pksAC for further extension, producing ascochital and ascochitine. The aldehyde dehydrogenase (orf1), the 2-oxoglutarate-dependent dioxygenase (orf3) and the dehydrogenase (orf9) are probably involved in subsequent oxidations of methyl groups to the carboxylic acid of the heterocyclic ring. The ascochitine gene cluster also includes a gene encoding a short peptide with a cupin domain (orf2) that is often found in secondary metabolite gene clusters and which function has still to be determined. The sequence is that of Glyoxylase-like domain-containing protein from Didymella fabae (Leaf and pod spot disease fungus).